A 367-amino-acid chain; its full sequence is ELAV-like protein 3 (367 aa).

RRM domains follow at residues 39–117 (TNLI…YARP), 125–205 (ANLY…FANN), and 284–362 (WCIF…FKTS).

It belongs to the RRM elav family. Interacts with MAP1B light chain LC1. As to expression, brain specific. Expressed in the hippocampus with expression in CA1, CA3 and dentate gyrus.

In terms of biological role, RNA-binding protein that binds to AU-rich element (ARE) sequences of target mRNAs, including VEGF mRNA. May also bind poly-A tracts via RRM 3. May be involved in neuronal differentiation and maintenance. Plays a role in the stabilization of GAP43 mRNA and in spatial learning. In Mus musculus (Mouse), this protein is ELAV-like protein 3 (Elavl3).